Reading from the N-terminus, the 406-residue chain is Acetate kinase (406 aa).

Asparagine 8 is a Mg(2+) binding site. Residue lysine 15 coordinates ATP. Position 92 (arginine 92) interacts with substrate. The Proton donor/acceptor role is filled by aspartate 149. Residues 209–213 (HLGNG), 283–285 (DFR), and 331–335 (GVGEN) contribute to the ATP site. Residue glutamate 385 coordinates Mg(2+).

Belongs to the acetokinase family. Homodimer. Requires Mg(2+) as cofactor. The cofactor is Mn(2+).

Its subcellular location is the cytoplasm. It carries out the reaction acetate + ATP = acetyl phosphate + ADP. The protein operates within metabolic intermediate biosynthesis; acetyl-CoA biosynthesis; acetyl-CoA from acetate: step 1/2. Its function is as follows. Catalyzes the formation of acetyl phosphate from acetate and ATP. Can also catalyze the reverse reaction. This is Acetate kinase from Corynebacterium aurimucosum (strain ATCC 700975 / DSM 44827 / CIP 107346 / CN-1) (Corynebacterium nigricans).